A 124-amino-acid chain; its full sequence is Small ribosomal subunit protein bS6 (124 aa).

The interval 96–124 (ETGPSPMMKEVQREEAKKAAAAQPTEAQA) is disordered. Residues 114–124 (AAAAQPTEAQA) show a composition bias toward low complexity.

Belongs to the bacterial ribosomal protein bS6 family.

Its function is as follows. Binds together with bS18 to 16S ribosomal RNA. This is Small ribosomal subunit protein bS6 from Burkholderia vietnamiensis (strain G4 / LMG 22486) (Burkholderia cepacia (strain R1808)).